Consider the following 467-residue polypeptide: ATP synthase subunit beta (467 aa).

156–163 (GGAGVGKT) is a binding site for ATP.

Belongs to the ATPase alpha/beta chains family. F-type ATPases have 2 components, CF(1) - the catalytic core - and CF(0) - the membrane proton channel. CF(1) has five subunits: alpha(3), beta(3), gamma(1), delta(1), epsilon(1). CF(0) has three main subunits: a(1), b(2) and c(9-12). The alpha and beta chains form an alternating ring which encloses part of the gamma chain. CF(1) is attached to CF(0) by a central stalk formed by the gamma and epsilon chains, while a peripheral stalk is formed by the delta and b chains.

The protein localises to the cell inner membrane. The catalysed reaction is ATP + H2O + 4 H(+)(in) = ADP + phosphate + 5 H(+)(out). In terms of biological role, produces ATP from ADP in the presence of a proton gradient across the membrane. The catalytic sites are hosted primarily by the beta subunits. The chain is ATP synthase subunit beta from Cupriavidus taiwanensis (strain DSM 17343 / BCRC 17206 / CCUG 44338 / CIP 107171 / LMG 19424 / R1) (Ralstonia taiwanensis (strain LMG 19424)).